The primary structure comprises 320 residues: Methyltransferase gedG (320 aa).

The segment at 61–154 (DAGAGNGVYS…QLRPGGTFAC (94 aa)) is methyltransferase domain. Residues 231-252 (GLLPPERRGEVTEPDHEGPHDQ) are disordered. The segment covering 235–252 (PERRGEVTEPDHEGPHDQ) has biased composition (basic and acidic residues).

Belongs to the methyltransferase superfamily.

It functions in the pathway secondary metabolite biosynthesis. Functionally, methyltransferase; part of the gene cluster that mediates the biosynthesis of geodin, an intermediate in the biosynthesis of other natural products. The pathway begins with the synthesis of atrochrysone thioester by the polyketide synthase (PKS) gedC. The atrochrysone carboxyl ACP thioesterase gedB then breaks the thioester bond and releases the atrochrysone carboxylic acid from gedC. The atrochrysone carboxylic acid is then converted to atrochrysone which is further transformed into emodinanthrone. The next step is performed by the emodinanthrone oxygenase gedH that catalyzes the oxidation of emodinanthrone to emodin. Emodin O-methyltransferase encoded probably by gedA then catalyzes methylation of the 8-hydroxy group of emodin to form questin. Ring cleavage of questin by questin oxidase gedK leads to desmethylsulochrin via several intermediates including questin epoxide. Another methylation step probably catalyzed by methyltransferase gedG leads to the formation of sulochrin which is further converted to dihydrogeodin by the sulochrin halogenase gedL. Finally, the dihydrogeodin oxidase gedJ catalyzes the stereospecific phenol oxidative coupling reaction converting dihydrogeodin to geodin. The sequence is that of Methyltransferase gedG from Aspergillus terreus (strain NIH 2624 / FGSC A1156).